Here is a 154-residue protein sequence, read N- to C-terminus: Superoxide dismutase [Cu-Zn] (154 aa).

Cu cation-binding residues include His-47, His-49, and His-64. Cysteines 58 and 147 form a disulfide. 4 residues coordinate Zn(2+): His-64, His-72, His-81, and Asp-84. His-121 is a binding site for Cu cation. A compositionally biased stretch (basic and acidic residues) spans 126 to 137; that stretch reads DLGRGGNEESKK. Residues 126 to 147 form a disordered region; it reads DLGRGGNEESKKTGNAGPRPAC.

This sequence belongs to the Cu-Zn superoxide dismutase family. As to quaternary structure, homodimer. Cu cation is required as a cofactor. It depends on Zn(2+) as a cofactor.

The protein localises to the cytoplasm. The enzyme catalyses 2 superoxide + 2 H(+) = H2O2 + O2. Functionally, destroys radicals which are normally produced within the cells and which are toxic to biological systems. Plays an important role in the phase transition, and may be important in vivo, as it would facilitate the intracellular survival of the fungus by providing a non-toxic environment in the macrophage phagolysosomes. The protein is Superoxide dismutase [Cu-Zn] of Talaromyces marneffei (Penicillium marneffei).